The chain runs to 248 residues: Probable uridine-cytidine kinase (248 aa).

15-23 (GGTSCGKST) provides a ligand contact to ATP. D73, Y101, R154, R164, and Q172 together coordinate substrate. D201 contributes to the ATP binding site. Residues 224-248 (SDEEEEKENELVKQGSFRRPFSRPH) are disordered.

The protein belongs to the uridine kinase family.

The enzyme catalyses uridine + ATP = UMP + ADP + H(+). It carries out the reaction cytidine + ATP = CMP + ADP + H(+). It functions in the pathway pyrimidine metabolism; CTP biosynthesis via salvage pathway; CTP from cytidine: step 1/3. Its pathway is pyrimidine metabolism; UMP biosynthesis via salvage pathway; UMP from uridine: step 1/1. The chain is Probable uridine-cytidine kinase from Caenorhabditis elegans.